Reading from the N-terminus, the 384-residue chain is Probable L-tyrosine/L-aspartate decarboxylase (384 aa).

Lys233 carries the N6-(pyridoxal phosphate)lysine modification.

The protein belongs to the group II decarboxylase family. MfnA subfamily. The cofactor is pyridoxal 5'-phosphate.

It catalyses the reaction L-tyrosine + H(+) = tyramine + CO2. The catalysed reaction is L-aspartate + H(+) = beta-alanine + CO2. The protein operates within cofactor biosynthesis; methanofuran biosynthesis. It functions in the pathway cofactor biosynthesis; coenzyme A biosynthesis. Its function is as follows. Catalyzes the decarboxylation of L-tyrosine to produce tyramine for methanofuran biosynthesis. Can also catalyze the decarboxylation of L-aspartate to produce beta-alanine for coenzyme A (CoA) biosynthesis. The sequence is that of Probable L-tyrosine/L-aspartate decarboxylase from Methanococcus maripaludis (strain C5 / ATCC BAA-1333).